Here is a 101-residue protein sequence, read N- to C-terminus: Ascorbate-specific PTS system EIIB component (101 aa).

Residues 3 to 96 enclose the PTS EIIB type-2 domain; it reads VRILAVCGNG…KLLKVIKEHF (94 aa). The active-site Phosphocysteine intermediate is C9. The residue at position 9 (C9) is a Phosphocysteine.

It is found in the cytoplasm. The catalysed reaction is N(pros)-phospho-L-histidyl-[protein] + L-ascorbate(out) = L-ascorbate 6-phosphate(in) + L-histidyl-[protein]. Functionally, the phosphoenolpyruvate-dependent sugar phosphotransferase system (sugar PTS), a major carbohydrate active transport system, catalyzes the phosphorylation of incoming sugar substrates concomitantly with their translocation across the cell membrane. The enzyme II UlaABC PTS system is involved in ascorbate transport. The polypeptide is Ascorbate-specific PTS system EIIB component (ulaB) (Shigella dysenteriae serotype 1 (strain Sd197)).